Reading from the N-terminus, the 484-residue chain is Probable glycine dehydrogenase (decarboxylating) subunit 2 (484 aa).

Lys264 bears the N6-(pyridoxal phosphate)lysine mark.

It belongs to the GcvP family. C-terminal subunit subfamily. As to quaternary structure, the glycine cleavage system is composed of four proteins: P, T, L and H. In this organism, the P 'protein' is a heterodimer of two subunits. Pyridoxal 5'-phosphate is required as a cofactor.

The enzyme catalyses N(6)-[(R)-lipoyl]-L-lysyl-[glycine-cleavage complex H protein] + glycine + H(+) = N(6)-[(R)-S(8)-aminomethyldihydrolipoyl]-L-lysyl-[glycine-cleavage complex H protein] + CO2. Its function is as follows. The glycine cleavage system catalyzes the degradation of glycine. The P protein binds the alpha-amino group of glycine through its pyridoxal phosphate cofactor; CO(2) is released and the remaining methylamine moiety is then transferred to the lipoamide cofactor of the H protein. This is Probable glycine dehydrogenase (decarboxylating) subunit 2 from Legionella pneumophila (strain Lens).